A 590-amino-acid chain; its full sequence is Ras-specific guanine nucleotide-releasing factor RalGPS2 (590 aa).

A Ras-GEF domain is found at 49 to 287; that stretch reads TPEEYAGQIT…YKLSLKIEPG (239 aa). The disordered stretch occupies residues 288–319; sequence ASTPRSAASREDLAGPDIGASPQGGRKSSAAA. A phosphoserine mark is found at Ser293, Ser296, and Ser308. A PXXP motif is present at residues 331 to 334; it reads PQTP. The residue at position 333 (Thr333) is a Phosphothreonine. A phosphoserine mark is found at Ser336 and Ser350. Position 368 is a phosphothreonine (Thr368). Positions 380 to 413 are disordered; it reads DSVMEPHAPSRGQAESSTLSSGISIGSSDGSELS. Ser381 is subject to Phosphoserine. The segment covering 394-410 has biased composition (low complexity); it reads ESSTLSSGISIGSSDGS. Ser429 bears the Phosphoserine mark. Positions 464-576 constitute a PH domain; the sequence is AVTIQGVLRR…WFKHLSAACQ (113 aa). The required for stimulation of nucleotide exchange by RALA stretch occupies residues 466 to 590; it reads TIQGVLRRKT…QVPTNLMTFE (125 aa).

As to quaternary structure, interacts with RALA. Interacts with the SH3 domains of GRB2 and PLCG1. As to expression, abundant in brain and testis.

The protein resides in the cytoplasm. Its subcellular location is the cell membrane. Guanine nucleotide exchange factor for the small GTPase RALA. May be involved in cytoskeletal organization. May also be involved in the stimulation of transcription in a Ras-independent fashion. This Mus musculus (Mouse) protein is Ras-specific guanine nucleotide-releasing factor RalGPS2 (Ralgps2).